We begin with the raw amino-acid sequence, 565 residues long: Proline--tRNA ligase (565 aa).

The protein belongs to the class-II aminoacyl-tRNA synthetase family. ProS type 1 subfamily. As to quaternary structure, homodimer.

Its subcellular location is the cytoplasm. The enzyme catalyses tRNA(Pro) + L-proline + ATP = L-prolyl-tRNA(Pro) + AMP + diphosphate. Functionally, catalyzes the attachment of proline to tRNA(Pro) in a two-step reaction: proline is first activated by ATP to form Pro-AMP and then transferred to the acceptor end of tRNA(Pro). As ProRS can inadvertently accommodate and process non-cognate amino acids such as alanine and cysteine, to avoid such errors it has two additional distinct editing activities against alanine. One activity is designated as 'pretransfer' editing and involves the tRNA(Pro)-independent hydrolysis of activated Ala-AMP. The other activity is designated 'posttransfer' editing and involves deacylation of mischarged Ala-tRNA(Pro). The misacylated Cys-tRNA(Pro) is not edited by ProRS. The polypeptide is Proline--tRNA ligase (Lactobacillus delbrueckii subsp. bulgaricus (strain ATCC BAA-365 / Lb-18)).